Here is a 227-residue protein sequence, read N- to C-terminus: MSAVKTLEAVARDRVGKGAARAVRRQGQIPAVIYGGGQPPQSIAVDLIRTRTLIYAGGFKTTLFEINAGGKKVRAIPRDFQLDPVTGVPLHVDFLRVVSGQTVTVEVPVHFVNEDAAPGIKKLGGTLNIVAHTLSLEVAPDQIPDAIEVDLTGRAIGDVIHVSDIKIPAGTYTGEATDPVANIVPPTVLGAEVEAEEAAIAEAQSAEAAEEKAEESAEDEKKDGEEA.

A disordered region spans residues 199-227 (AIAEAQSAEAAEEKAEESAEDEKKDGEEA). The span at 209-227 (AEEKAEESAEDEKKDGEEA) shows a compositional bias: basic and acidic residues.

The protein belongs to the bacterial ribosomal protein bL25 family. CTC subfamily. Part of the 50S ribosomal subunit; part of the 5S rRNA/L5/L18/L25 subcomplex. Contacts the 5S rRNA. Binds to the 5S rRNA independently of L5 and L18.

In terms of biological role, this is one of the proteins that binds to the 5S RNA in the ribosome where it forms part of the central protuberance. The protein is Large ribosomal subunit protein bL25 of Methylobacterium radiotolerans (strain ATCC 27329 / DSM 1819 / JCM 2831 / NBRC 15690 / NCIMB 10815 / 0-1).